We begin with the raw amino-acid sequence, 297 residues long: Inosose dehydratase (297 aa).

Belongs to the IolE/MocC family. Requires glutathione as cofactor. It depends on Co(2+) as a cofactor. Mn(2+) is required as a cofactor.

The catalysed reaction is scyllo-inosose = 3D-3,5/4-trihydroxycyclohexane-1,2-dione + H2O. The protein operates within polyol metabolism; myo-inositol degradation into acetyl-CoA; acetyl-CoA from myo-inositol: step 2/7. In terms of biological role, catalyzes the dehydration of inosose (2-keto-myo-inositol, 2KMI or 2,4,6/3,5-pentahydroxycyclohexanone) to 3D-(3,5/4)-trihydroxycyclohexane-1,2-dione (D-2,3-diketo-4-deoxy-epi-inositol). The sequence is that of Inosose dehydratase from Clostridium perfringens (strain 13 / Type A).